The following is a 318-amino-acid chain: Probable casein kinase I homolog ECU11_1980 (318 aa).

In terms of domain architecture, Protein kinase spans 8-276 (YTICREIGKG…YLNSLLDKIF (269 aa)). ATP contacts are provided by residues 14–22 (IGKGGFGKV) and lysine 37. The active-site Proton acceptor is the aspartate 129.

This sequence belongs to the protein kinase superfamily. CK1 Ser/Thr protein kinase family. Casein kinase I subfamily.

It is found in the nucleus. It catalyses the reaction L-seryl-[protein] + ATP = O-phospho-L-seryl-[protein] + ADP + H(+). The enzyme catalyses L-threonyl-[protein] + ATP = O-phospho-L-threonyl-[protein] + ADP + H(+). In terms of biological role, involved in DNA repair. May regulate the activity of protein(s) involved in double strand break repair caused by gamma rays. The protein is Probable casein kinase I homolog ECU11_1980 of Encephalitozoon cuniculi (strain GB-M1) (Microsporidian parasite).